Here is a 77-residue protein sequence, read N- to C-terminus: Major pilus subunit operon regulatory protein (77 aa).

The protein to E.coli AfaF and DaaF.

Functionally, plays a role in the inhibition of methylation at the GATC1028 site located in the regulatory region upstream of the pabA promoter. May, in conjunction with the Mbf (methylation blocking factor), inhibits deoxyadenosine methylase from methylating the GATC1028 site. The polypeptide is Major pilus subunit operon regulatory protein (papI) (Escherichia coli).